A 588-amino-acid chain; its full sequence is Transport ATP-binding protein AarD (588 aa).

The region spanning 24-316 is the ABC transmembrane type-1 domain; the sequence is LRISMLLGVV…LGTYYHAKAQ (293 aa). 6 helical membrane-spanning segments follow: residues 29–49, 62–82, 149–169, 170–190, 250–270, and 276–296; these read LLGV…AVIL, LLTP…LTVI, IIPI…ALIL, FATA…AADA, SGVL…YFGF, and LNFG…ALIL. The region spanning 350-583 is the ABC transporter domain; that stretch reads IEANKLEIYS…EGPFARLLAH (234 aa). 383-390 serves as a coordination point for ATP; that stretch reads GQSGAGKS.

It belongs to the ABC transporter superfamily.

It localises to the cell inner membrane. In terms of biological role, somehow involved in the cytochrome D branch of aerobic respiration. Seems to be a component of a transport system. In Providencia stuartii, this protein is Transport ATP-binding protein AarD (aarD).